The sequence spans 100 residues: Small ribosomal subunit protein uS14c (100 aa).

Positions 1–31 (MAKKSLIQREKKRQKLEQKYHSIRRSSKKEI) are disordered.

Belongs to the universal ribosomal protein uS14 family. As to quaternary structure, part of the 30S ribosomal subunit.

The protein resides in the plastid. It localises to the chloroplast. Functionally, binds 16S rRNA, required for the assembly of 30S particles. This chain is Small ribosomal subunit protein uS14c, found in Atropa belladonna (Belladonna).